A 526-amino-acid chain; its full sequence is piRNA biogenesis factor prde-1 (526 aa).

The segment at 436-526 (EAKEEPIDKK…RRRGCEIRRK (91 aa)) is disordered. Over residues 439-448 (EEPIDKKKDP) the composition is skewed to basic and acidic residues. Basic residues predominate over residues 458–467 (GKKRRGRKPK). A compositionally biased stretch (basic and acidic residues) spans 468–487 (KKDDPKMELKDEVKDLKDFV). A compositionally biased stretch (low complexity) spans 489 to 498 (EESTSASSSA).

As to expression, expressed in male and female germ cells.

It localises to the nucleus. The protein resides in the chromosome. Nuclear factor required for the production of piwi-interacting RNA (piRNA) precursors. Specifically required for piRNAs produced from loci associated with the Ruby motif. Promotes binding of the transcription factor snpc-4 at piRNA genomic clusters. Required for normal fertility. The protein is piRNA biogenesis factor prde-1 of Caenorhabditis elegans.